We begin with the raw amino-acid sequence, 120 residues long: U13-barytoxin-Tl1a (120 aa).

The N-terminal stretch at 1-20 (MKTIIVFLSLLVLATKFGDA) is a signal peptide. Disulfide bonds link C75–C90, C82–C95, and C89–C109.

The protein belongs to the neurotoxin 14 (magi-1) family. 05 (ICK-7) subfamily. ICK-7 sub-subfamily. In terms of tissue distribution, expressed by the venom gland.

It is found in the secreted. In terms of biological role, ion channel inhibitor. The chain is U13-barytoxin-Tl1a from Trittame loki (Brush-footed trapdoor spider).